Reading from the N-terminus, the 565-residue chain is Translation machinery-associated protein 64 (565 aa).

Positions 89 to 170 constitute a PUA domain; that stretch reads LPIVLTHGFV…VAVKIIHHFN (82 aa). The SWIB/MDM2 domain maps to 362–447; it reads TLYKPFNLAK…GEILHPLLTN (86 aa). The SUI1 domain maps to 475–547; sequence IKIITEMKIG…SIIDHLNKLG (73 aa).

Belongs to the eIF2D family. In terms of assembly, interacts with the 40S ribosomal subunit.

The chain is Translation machinery-associated protein 64 (TMA64) from Saccharomyces cerevisiae (strain ATCC 204508 / S288c) (Baker's yeast).